We begin with the raw amino-acid sequence, 412 residues long: Putative pectate lyase 11 (412 aa).

Positions 1-24 (MVSYSNNHFAYAFLLLLTIGNTLA) are cleaved as a signal peptide. Ca(2+) contacts are provided by D210, D234, and D238. The active site involves R290.

Belongs to the polysaccharide lyase 1 family. Ca(2+) serves as cofactor.

The enzyme catalyses Eliminative cleavage of (1-&gt;4)-alpha-D-galacturonan to give oligosaccharides with 4-deoxy-alpha-D-galact-4-enuronosyl groups at their non-reducing ends.. It participates in glycan metabolism; pectin degradation; 2-dehydro-3-deoxy-D-gluconate from pectin: step 2/5. The polypeptide is Putative pectate lyase 11 (Arabidopsis thaliana (Mouse-ear cress)).